The chain runs to 310 residues: N-acetyl-gamma-glutamyl-phosphate reductase (310 aa).

Residue cysteine 117 is part of the active site.

The protein belongs to the NAGSA dehydrogenase family. Type 2 subfamily.

The protein resides in the cytoplasm. It catalyses the reaction N-acetyl-L-glutamate 5-semialdehyde + phosphate + NADP(+) = N-acetyl-L-glutamyl 5-phosphate + NADPH + H(+). Its pathway is amino-acid biosynthesis; L-arginine biosynthesis; N(2)-acetyl-L-ornithine from L-glutamate: step 3/4. Catalyzes the NADPH-dependent reduction of N-acetyl-5-glutamyl phosphate to yield N-acetyl-L-glutamate 5-semialdehyde. This is N-acetyl-gamma-glutamyl-phosphate reductase from Brucella suis (strain ATCC 23445 / NCTC 10510).